The following is a 346-amino-acid chain: Peripherin-2 (346 aa).

Residues 1–18 (MALLKVKFDQKKRVKLAQ) lie on the Cytoplasmic side of the membrane. The chain crosses the membrane as a helical span at residues 19–41 (GLWLMNWFSVLAGIIIFGLGLFL). At 42 to 62 (KIELRKRSDVMNNSESHFVPN) the chain is on the lumenal side. A glycan (N-linked (GlcNAc...) asparagine) is linked at Asn-53. The helical transmembrane segment at 63-79 (SLIGVGVLSCVFNSLAG) threads the bilayer. Topologically, residues 80 to 101 (KICYDALDPAKYAKWKPWLKPY) are cytoplasmic. The chain crosses the membrane as a helical span at residues 102-122 (LAVCVLFNVVLFLVALCCFLL). At 123–264 (RGSLESTLAH…LSYYSNLMNT (142 aa)) the chain is on the lumenal side. N-linked (GlcNAc...) asparagine glycans are attached at residues Asn-229 and Asn-263. A helical transmembrane segment spans residues 265 to 283 (TGAVTLLVWLFEVTITVGL). Topologically, residues 284 to 346 (RYLHTALEGM…EDAGQAPAAG (63 aa)) are cytoplasmic. The segment at 341–346 (QAPAAG) is interaction with MREG.

This sequence belongs to the PRPH2/ROM1 family. Homodimer; disulfide-linked. Forms a homotetramer. Forms a heterotetramer with ROM1. Homotetramer and heterotetramer core complexes go on to form higher order complexes by formation of intermolecular disulfide bonds. Interacts with MREG. Interacts with STX3. Interacts with SNAP25. As to expression, retina (photoreceptor). In rim region of ROS (rod outer segment) disks.

The protein resides in the membrane. Its subcellular location is the cell projection. It localises to the cilium. It is found in the photoreceptor outer segment. The protein localises to the photoreceptor inner segment. Essential for retina photoreceptor outer segment disk morphogenesis, may also play a role with ROM1 in the maintenance of outer segment disk structure. Required for the maintenance of retinal outer nuclear layer thickness. Required for the correct development and organization of the photoreceptor inner segment. The polypeptide is Peripherin-2 (PRPH2) (Bos taurus (Bovine)).